Here is a 495-residue protein sequence, read N- to C-terminus: Probable polyamine transporter At1g31830 (495 aa).

Transmembrane regions (helical) follow at residues 49–69 (VSMLPLVFLIFYEVSGGPFGV), 79–99 (LLALLGFVIFPFIWSIPEALI), 112–132 (GYVVWVSSALGPFWGFQQGWM), 156–176 (VPALGSGLPRVASILVLTILL), 186–206 (IVGWVAVLMGVFSILPFAVMG), 230–250 (LYLNTLFWNLNYWDSISTLAG), 267–287 (VILVACSYIFPLLAGIGAIPL), 357–377 (TPLLGILFSASGVVLLSWLSF), 380–400 (IVAAENLLYCVGMILEFIAFV), 417–437 (IGTTGSILMCIPPTILICAVV), and 442–462 (LKVAAVSIVMMIIGFLIHPLL).

Belongs to the amino acid-polyamine-organocation (APC) superfamily. Polyamine:cation symporter (PHS) (TC 2.A.3.12) family.

The protein localises to the cell membrane. Its function is as follows. Probable cell membrane polyamine/proton symporter involved in the polyamine uptake in cells. The chain is Probable polyamine transporter At1g31830 from Arabidopsis thaliana (Mouse-ear cress).